Consider the following 148-residue polypeptide: Deoxyuridine 5'-triphosphate nucleotidohydrolase (148 aa).

Substrate-binding positions include 67–69, Asn80, 84–86, and Met94; these read RSG and LID.

The protein belongs to the dUTPase family. Mg(2+) is required as a cofactor.

It carries out the reaction dUTP + H2O = dUMP + diphosphate + H(+). It functions in the pathway pyrimidine metabolism; dUMP biosynthesis; dUMP from dCTP (dUTP route): step 2/2. This enzyme is involved in nucleotide metabolism: it produces dUMP, the immediate precursor of thymidine nucleotides and it decreases the intracellular concentration of dUTP so that uracil cannot be incorporated into DNA. The protein is Deoxyuridine 5'-triphosphate nucleotidohydrolase of Burkholderia ambifaria (strain ATCC BAA-244 / DSM 16087 / CCUG 44356 / LMG 19182 / AMMD) (Burkholderia cepacia (strain AMMD)).